The following is a 73-amino-acid chain: uncharacterized protein (73 aa).

This is an uncharacterized protein from Swinepox virus (strain Kasza) (SWPV).